Consider the following 360-residue polypeptide: Phosphoserine aminotransferase (360 aa).

Residue Arg-41 participates in L-glutamate binding. Pyridoxal 5'-phosphate is bound by residues 75-76 (AS), Trp-101, Thr-151, Asp-171, and Gln-194. Lys-195 is modified (N6-(pyridoxal phosphate)lysine). 236-237 (NT) serves as a coordination point for pyridoxal 5'-phosphate.

Belongs to the class-V pyridoxal-phosphate-dependent aminotransferase family. SerC subfamily. Homodimer. Pyridoxal 5'-phosphate is required as a cofactor.

The protein resides in the cytoplasm. It carries out the reaction O-phospho-L-serine + 2-oxoglutarate = 3-phosphooxypyruvate + L-glutamate. The catalysed reaction is 4-(phosphooxy)-L-threonine + 2-oxoglutarate = (R)-3-hydroxy-2-oxo-4-phosphooxybutanoate + L-glutamate. Its pathway is amino-acid biosynthesis; L-serine biosynthesis; L-serine from 3-phospho-D-glycerate: step 2/3. It participates in cofactor biosynthesis; pyridoxine 5'-phosphate biosynthesis; pyridoxine 5'-phosphate from D-erythrose 4-phosphate: step 3/5. Its function is as follows. Catalyzes the reversible conversion of 3-phosphohydroxypyruvate to phosphoserine and of 3-hydroxy-2-oxo-4-phosphonooxybutanoate to phosphohydroxythreonine. The protein is Phosphoserine aminotransferase of Herpetosiphon aurantiacus (strain ATCC 23779 / DSM 785 / 114-95).